The sequence spans 668 residues: DNA mismatch repair protein MutL (668 aa).

The segment at 437–459 (TYQSQYSETGSHSQETLPLSEQK) is disordered. Polar residues predominate over residues 438 to 459 (YQSQYSETGSHSQETLPLSEQK).

It belongs to the DNA mismatch repair MutL/HexB family.

This protein is involved in the repair of mismatches in DNA. It is required for dam-dependent methyl-directed DNA mismatch repair. May act as a 'molecular matchmaker', a protein that promotes the formation of a stable complex between two or more DNA-binding proteins in an ATP-dependent manner without itself being part of a final effector complex. This chain is DNA mismatch repair protein MutL, found in Leuconostoc citreum (strain KM20).